The following is a 404-amino-acid chain: Glycosylated lysosomal membrane protein (404 aa).

The first 26 residues, 1 to 26 (MSGYEKPSRGWGFCALSPVLLSLLMA), serve as a signal peptide directing secretion. The Lumenal segment spans residues 27 to 370 (APLGLLGEET…VDALSPLVLG (344 aa)). Residues asparagine 63, asparagine 132, asparagine 157, asparagine 185, and asparagine 228 are each glycosylated (N-linked (GlcNAc...) asparagine). The chain crosses the membrane as a helical span at residues 371-391 (IMAVALGAPALMLLAGGLFLL). Over 392–404 (LGRKRDSEYQSIN) the chain is Cytoplasmic. Positions 400–404 (YQSIN) match the Lysosomal targeting motif motif.

Belongs to the GLMP family. In terms of assembly, interacts (via lumenal domain) with lysosomal protein MFSD1; the interaction starts while both proteins are still in the endoplasmic reticulum and is required for stabilization of MFSD1 in lysosomes but has no direct effect on its targeting to lysosomes or transporter activity. Highly N-glycosylated. N-glycosylation is essential for GLMP stability and for MFSD1 lysosomal localization.

It is found in the lysosome membrane. Its function is as follows. Required to protect lysosomal transporter MFSD1 from lysosomal proteolysis and for MFSD1 lysosomal localization. The sequence is that of Glycosylated lysosomal membrane protein from Bos taurus (Bovine).